We begin with the raw amino-acid sequence, 53 residues long: uncharacterized protein (53 aa).

It is found in the mitochondrion matrix. The protein resides in the kinetoplast. This is an uncharacterized protein from Trypanosoma brucei brucei.